The chain runs to 388 residues: Dual-specificity RNA methyltransferase RlmN (388 aa).

Catalysis depends on glutamate 109, which acts as the Proton acceptor. The Radical SAM core domain occupies glutamate 115 to aspartate 354. An intrachain disulfide couples cysteine 122 to cysteine 359. [4Fe-4S] cluster contacts are provided by cysteine 129, cysteine 133, and cysteine 136. S-adenosyl-L-methionine contacts are provided by residues glycine 183–glutamate 184, serine 215, serine 237–histidine 239, and asparagine 316. The S-methylcysteine intermediate role is filled by cysteine 359.

This sequence belongs to the radical SAM superfamily. RlmN family. [4Fe-4S] cluster is required as a cofactor.

It localises to the cytoplasm. The catalysed reaction is adenosine(2503) in 23S rRNA + 2 reduced [2Fe-2S]-[ferredoxin] + 2 S-adenosyl-L-methionine = 2-methyladenosine(2503) in 23S rRNA + 5'-deoxyadenosine + L-methionine + 2 oxidized [2Fe-2S]-[ferredoxin] + S-adenosyl-L-homocysteine. It catalyses the reaction adenosine(37) in tRNA + 2 reduced [2Fe-2S]-[ferredoxin] + 2 S-adenosyl-L-methionine = 2-methyladenosine(37) in tRNA + 5'-deoxyadenosine + L-methionine + 2 oxidized [2Fe-2S]-[ferredoxin] + S-adenosyl-L-homocysteine. In terms of biological role, specifically methylates position 2 of adenine 2503 in 23S rRNA and position 2 of adenine 37 in tRNAs. m2A2503 modification seems to play a crucial role in the proofreading step occurring at the peptidyl transferase center and thus would serve to optimize ribosomal fidelity. The sequence is that of Dual-specificity RNA methyltransferase RlmN from Enterobacter sp. (strain 638).